We begin with the raw amino-acid sequence, 157 residues long: 3-dehydroquinate dehydratase (157 aa).

Catalysis depends on Y24, which acts as the Proton acceptor. N75, H81, and D88 together coordinate substrate. The active-site Proton donor is H101. Residues 102–103 (LS) and R112 contribute to the substrate site.

Belongs to the type-II 3-dehydroquinase family. In terms of assembly, homododecamer.

The enzyme catalyses 3-dehydroquinate = 3-dehydroshikimate + H2O. It participates in metabolic intermediate biosynthesis; chorismate biosynthesis; chorismate from D-erythrose 4-phosphate and phosphoenolpyruvate: step 3/7. Its function is as follows. Catalyzes a trans-dehydration via an enolate intermediate. The chain is 3-dehydroquinate dehydratase from Brucella melitensis biotype 1 (strain ATCC 23456 / CCUG 17765 / NCTC 10094 / 16M).